A 291-amino-acid polypeptide reads, in one-letter code: Bis(5'-nucleosyl)-tetraphosphatase, symmetrical (291 aa).

The protein belongs to the Ap4A hydrolase family.

It catalyses the reaction P(1),P(4)-bis(5'-adenosyl) tetraphosphate + H2O = 2 ADP + 2 H(+). Functionally, hydrolyzes diadenosine 5',5'''-P1,P4-tetraphosphate to yield ADP. In Coxiella burnetii (strain CbuG_Q212) (Coxiella burnetii (strain Q212)), this protein is Bis(5'-nucleosyl)-tetraphosphatase, symmetrical.